We begin with the raw amino-acid sequence, 300 residues long: N-acetylmuramic acid 6-phosphate etherase 2 (300 aa).

Positions 57-220 (ITAAFANGGR…TTGAMIRSGK (164 aa)) constitute an SIS domain. The Proton donor role is filled by Glu-85. The active site involves Glu-116.

Belongs to the GCKR-like family. MurNAc-6-P etherase subfamily. As to quaternary structure, homodimer.

It carries out the reaction N-acetyl-D-muramate 6-phosphate + H2O = N-acetyl-D-glucosamine 6-phosphate + (R)-lactate. It participates in amino-sugar metabolism; 1,6-anhydro-N-acetylmuramate degradation. The protein operates within amino-sugar metabolism; N-acetylmuramate degradation. It functions in the pathway cell wall biogenesis; peptidoglycan recycling. Specifically catalyzes the cleavage of the D-lactyl ether substituent of MurNAc 6-phosphate, producing GlcNAc 6-phosphate and D-lactate. Together with AnmK, is also required for the utilization of anhydro-N-acetylmuramic acid (anhMurNAc) either imported from the medium or derived from its own cell wall murein, and thus plays a role in cell wall recycling. The polypeptide is N-acetylmuramic acid 6-phosphate etherase 2 (Vibrio parahaemolyticus serotype O3:K6 (strain RIMD 2210633)).